The sequence spans 301 residues: Ribosomal protein L11 methyltransferase (301 aa).

Residues threonine 146, glycine 167, aspartate 189, and asparagine 237 each coordinate S-adenosyl-L-methionine.

This sequence belongs to the methyltransferase superfamily. PrmA family.

The protein localises to the cytoplasm. It catalyses the reaction L-lysyl-[protein] + 3 S-adenosyl-L-methionine = N(6),N(6),N(6)-trimethyl-L-lysyl-[protein] + 3 S-adenosyl-L-homocysteine + 3 H(+). Its function is as follows. Methylates ribosomal protein L11. The chain is Ribosomal protein L11 methyltransferase from Prochlorococcus marinus (strain MIT 9303).